The primary structure comprises 380 residues: Putative 8-amino-7-oxononanoate synthase (380 aa).

Arginine 18 is a substrate binding site. 106–107 (GY) lines the pyridoxal 5'-phosphate pocket. Histidine 131 serves as a coordination point for substrate. Pyridoxal 5'-phosphate is bound by residues serine 179, 205–208 (DEAH), and 236–239 (TFGK). Lysine 239 bears the N6-(pyridoxal phosphate)lysine mark. Threonine 352 provides a ligand contact to substrate.

The protein belongs to the class-II pyridoxal-phosphate-dependent aminotransferase family. BioF subfamily. As to quaternary structure, homodimer. Pyridoxal 5'-phosphate is required as a cofactor.

The catalysed reaction is 6-carboxyhexanoyl-[ACP] + L-alanine + H(+) = (8S)-8-amino-7-oxononanoate + holo-[ACP] + CO2. Its pathway is cofactor biosynthesis; biotin biosynthesis. Functionally, catalyzes the decarboxylative condensation of pimeloyl-[acyl-carrier protein] and L-alanine to produce 8-amino-7-oxononanoate (AON), [acyl-carrier protein], and carbon dioxide. The sequence is that of Putative 8-amino-7-oxononanoate synthase (bioF) from Neisseria gonorrhoeae (strain NCCP11945).